The primary structure comprises 111 residues: Translation initiation factor 1A (111 aa).

Residues 12-86 enclose the S1-like domain; it reads GEMPLPSEDE…KKGEVVYRYL (75 aa).

Belongs to the eIF-1A family.

Functionally, seems to be required for maximal rate of protein biosynthesis. Enhances ribosome dissociation into subunits and stabilizes the binding of the initiator Met-tRNA(I) to 40 S ribosomal subunits. The polypeptide is Translation initiation factor 1A (eIF1A) (Aeropyrum pernix (strain ATCC 700893 / DSM 11879 / JCM 9820 / NBRC 100138 / K1)).